A 387-amino-acid polypeptide reads, in one-letter code: Major outer membrane porin (387 aa).

The signal sequence occupies residues Met1–Ala22.

This sequence belongs to the chlamydial porin (CP) (TC 1.B.2) family. Part of a disulfide cross-linked outer membrane complex (COMC) composed of the major outer membrane porin (MOMP), the small cysteine-rich protein (OmcA) and the large cysteine-rich periplasmic protein (OmcB).

It localises to the cell outer membrane. In terms of biological role, in elementary bodies (EBs, the infectious stage, which is able to survive outside the host cell) provides the structural integrity of the outer envelope through disulfide cross-links with the small cysteine-rich protein and the large cysteine-rich periplasmic protein. It has been described in publications as the Sarkosyl-insoluble COMC (Chlamydia outer membrane complex), and serves as the functional equivalent of peptidoglycan. Its function is as follows. Permits diffusion of specific solutes through the outer membrane. The chain is Major outer membrane porin (ompA) from Chlamydia muridarum (strain MoPn / Nigg).